A 553-amino-acid polypeptide reads, in one-letter code: CTP synthase (553 aa).

Residues 1–270 are amidoligase domain; the sequence is MTKYVFVTGG…DDLICRELEL (270 aa). Position 13 (serine 13) interacts with CTP. Residue serine 13 participates in UTP binding. ATP is bound by residues 14–19 and aspartate 71; that span reads SLGKGI. The Mg(2+) site is built by aspartate 71 and glutamate 144. CTP-binding positions include 151 to 153, 191 to 196, and lysine 227; these read DIE and KTKPTQ. UTP contacts are provided by residues 191 to 196 and lysine 227; that span reads KTKPTQ. In terms of domain architecture, Glutamine amidotransferase type-1 spans 295–547; the sequence is TIGMVGKYVE…IKAALIHQDA (253 aa). Glycine 356 is an L-glutamine binding site. Cysteine 383 acts as the Nucleophile; for glutamine hydrolysis in catalysis. L-glutamine is bound by residues 384 to 387, glutamate 407, and arginine 473; that span reads LGMQ. Catalysis depends on residues histidine 520 and glutamate 522.

The protein belongs to the CTP synthase family. As to quaternary structure, homotetramer.

The catalysed reaction is UTP + L-glutamine + ATP + H2O = CTP + L-glutamate + ADP + phosphate + 2 H(+). It carries out the reaction L-glutamine + H2O = L-glutamate + NH4(+). The enzyme catalyses UTP + NH4(+) + ATP = CTP + ADP + phosphate + 2 H(+). It functions in the pathway pyrimidine metabolism; CTP biosynthesis via de novo pathway; CTP from UDP: step 2/2. With respect to regulation, allosterically activated by GTP, when glutamine is the substrate; GTP has no effect on the reaction when ammonia is the substrate. The allosteric effector GTP functions by stabilizing the protein conformation that binds the tetrahedral intermediate(s) formed during glutamine hydrolysis. Inhibited by the product CTP, via allosteric rather than competitive inhibition. Functionally, catalyzes the ATP-dependent amination of UTP to CTP with either L-glutamine or ammonia as the source of nitrogen. Regulates intracellular CTP levels through interactions with the four ribonucleotide triphosphates. The polypeptide is CTP synthase (Polynucleobacter asymbioticus (strain DSM 18221 / CIP 109841 / QLW-P1DMWA-1) (Polynucleobacter necessarius subsp. asymbioticus)).